The following is a 110-amino-acid chain: MASKDELACVYAALILLDDDVDITTEKVNTILRAAGVSVEPYWPGLFTKALEGLDLKSMITNVGSGVGAAPAAGGAAAATEAPAAKEEKKEEKKEESEEEDEDMGFGLFD.

Ala2 is subject to Blocked amino end (Ala). A compositionally biased stretch (low complexity) spans 69–83 (AAPAAGGAAAATEAP). Residues 69-110 (AAPAAGGAAAATEAPAAKEEKKEEKKEESEEEDEDMGFGLFD) form a disordered region. The span at 84–96 (AAKEEKKEEKKEE) shows a compositional bias: basic and acidic residues. The residue at position 97 (Ser97) is a Phosphoserine; in form eL12'-P.

In terms of assembly, part of the ribosomal stalk of the large ribosomal subunit; P1 and P2 exist as dimers which assemble on the P0 scaffold. Phosphorylation of Ser-97 converts eL12' to eL12'-P.

Functionally, plays an important role in the elongation step of protein synthesis. In Artemia salina (Brine shrimp), this protein is Large ribosomal subunit protein P1.